The chain runs to 536 residues: Chaperonin GroEL (536 aa).

Residues 29 to 32, 86 to 90, G412, and D493 each bind ATP; these read TLGP and DGTTT.

Belongs to the chaperonin (HSP60) family. As to quaternary structure, forms a cylinder of 14 subunits composed of two heptameric rings stacked back-to-back. Interacts with the co-chaperonin GroES.

It localises to the cytoplasm. The catalysed reaction is ATP + H2O + a folded polypeptide = ADP + phosphate + an unfolded polypeptide.. Its function is as follows. Together with its co-chaperonin GroES, plays an essential role in assisting protein folding. The GroEL-GroES system forms a nano-cage that allows encapsulation of the non-native substrate proteins and provides a physical environment optimized to promote and accelerate protein folding. The protein is Chaperonin GroEL of Onion yellows phytoplasma (strain OY-M).